A 274-amino-acid polypeptide reads, in one-letter code: Acetyl-coenzyme A carboxylase carboxyl transferase subunit alpha (274 aa).

In terms of domain architecture, CoA carboxyltransferase C-terminal spans 2–250; sequence NKEFIKSIVV…KKEIMNAMNE (249 aa).

It belongs to the AccA family. Acetyl-CoA carboxylase is a heterohexamer composed of biotin carboxyl carrier protein (AccB), biotin carboxylase (AccC) and two subunits each of ACCase subunit alpha (AccA) and ACCase subunit beta (AccD).

The protein localises to the cytoplasm. The catalysed reaction is N(6)-carboxybiotinyl-L-lysyl-[protein] + acetyl-CoA = N(6)-biotinyl-L-lysyl-[protein] + malonyl-CoA. The protein operates within lipid metabolism; malonyl-CoA biosynthesis; malonyl-CoA from acetyl-CoA: step 1/1. Functionally, component of the acetyl coenzyme A carboxylase (ACC) complex. First, biotin carboxylase catalyzes the carboxylation of biotin on its carrier protein (BCCP) and then the CO(2) group is transferred by the carboxyltransferase to acetyl-CoA to form malonyl-CoA. This chain is Acetyl-coenzyme A carboxylase carboxyl transferase subunit alpha, found in Clostridium botulinum (strain Alaska E43 / Type E3).